Reading from the N-terminus, the 220-residue chain is MKAFDRPALTVLLVQGARDLSLNLSEAQITKLIDYLALMAKWNSVYNLTAVRDPVQMVTQHLLDSLAAVSAFSNAKNVLDVGAGGGLPGIVLAIWAAEAHPEMRISMIDTVHKKTAFLTQVKAELNLSNVSVYTARVEQWQAPQKFDVITSRAFADLSDFVNWSEHLLADGGQYIALKGVAPDTEVAGLPAGWQVREVRALQVPTLQAERHLVFIERTVL.

S-adenosyl-L-methionine-binding positions include Gly82, Leu87, 137–138, and Arg152; that span reads VE.

Belongs to the methyltransferase superfamily. RNA methyltransferase RsmG family.

It localises to the cytoplasm. It catalyses the reaction guanosine(527) in 16S rRNA + S-adenosyl-L-methionine = N(7)-methylguanosine(527) in 16S rRNA + S-adenosyl-L-homocysteine. Its function is as follows. Specifically methylates the N7 position of guanine in position 527 of 16S rRNA. The sequence is that of Ribosomal RNA small subunit methyltransferase G from Janthinobacterium sp. (strain Marseille) (Minibacterium massiliensis).